Reading from the N-terminus, the 199-residue chain is Thymidine kinase (199 aa).

ATP is bound by residues 23-30 (GSMFSGKT) and 95-98 (DEAQ). E96 functions as the Proton acceptor in the catalytic mechanism. Zn(2+)-binding residues include C152, C155, C184, and C187.

It belongs to the thymidine kinase family. As to quaternary structure, homotetramer.

It is found in the cytoplasm. The catalysed reaction is thymidine + ATP = dTMP + ADP + H(+). The protein is Thymidine kinase of Bacteroides fragilis (strain YCH46).